The following is a 536-amino-acid chain: MEELGVNNSRLGIETIGLGKAANVHYNLLPAALYEHAIRNGEAVLTADGALLAETGQHTGRSPKDKFILRDANTDSQIWWDNNKPMSKEHFDILHQDMLAHVAGKTLFVQDLIGGADAANALPTRVVTELAWHSLFIRNLLIRPERAALADFEAKFTIIDLPSFKADPARHGCRTETVIACDFTNNIVLIAGTYYAGEMKKSVFTALNYMLPAKQVMPMHCSANVGPAGDSAVFFGLSGTGKTTLSADPARTLIGDDEHGWGEDGIFNFEGGCYAKTIRLSAEAEPEIYATTKRFGTVLENVVLDENRVPDFNDGSKTENTRCAYPLNFIPNASPTGRAGHPKTIIMLTADAFGVMPPIAKLTPEQAMYHFLSGYTAKVAGTERGVTEPEATFSTCFGAPFMPRHPAEYGNLLKELIARHEVDCWLVNTGWTGGAYGVGNRMPIKATRALLTAALSGELKKVEFRTDANFGFAVPVSVEGVDTSILDPRSTWANGTDYDAQAKKLVGMFIANFEKFEAHVDSNVLDAAPVLAVAAQ.

3 residues coordinate substrate: arginine 61, tyrosine 195, and lysine 201. ATP is bound by residues lysine 201, histidine 220, and 236 to 244 (GLSGTGKTT). Mn(2+)-binding residues include lysine 201 and histidine 220. Aspartate 257 contributes to the Mn(2+) binding site. 3 residues coordinate ATP: glutamate 285, arginine 322, and threonine 447. Residue arginine 322 coordinates substrate.

The protein belongs to the phosphoenolpyruvate carboxykinase (ATP) family. Mn(2+) is required as a cofactor.

The protein localises to the cytoplasm. It carries out the reaction oxaloacetate + ATP = phosphoenolpyruvate + ADP + CO2. The protein operates within carbohydrate biosynthesis; gluconeogenesis. Its function is as follows. Involved in the gluconeogenesis. Catalyzes the conversion of oxaloacetate (OAA) to phosphoenolpyruvate (PEP) through direct phosphoryl transfer between the nucleoside triphosphate and OAA. This chain is Phosphoenolpyruvate carboxykinase (ATP), found in Allorhizobium ampelinum (strain ATCC BAA-846 / DSM 112012 / S4) (Agrobacterium vitis (strain S4)).